We begin with the raw amino-acid sequence, 462 residues long: G-patch domain and KOW motifs-containing protein homolog 1 (462 aa).

2 disordered regions span residues 1-26 and 182-218; these read MVEQ…KREE and LKLP…EEEK. Residues 154–202 form the G-patch domain; sequence IESFGLAILRGCNWKDGDGIGKNPQKVALKLPNRRPPGLGLGATPKNPV. The 28-residue stretch at 221–248 folds into the KOW 1 domain; it reads EIKVGSFIKVVDGRNKGVYGKVEGRDDD. Over residues 289 to 305 the composition is skewed to basic and acidic residues; it reads EYDKEKDRLETERKKLE. Positions 289–337 are disordered; the sequence is EYDKEKDRLETERKKLESQPPSTSTSQSSKDYKSKSSSSKHDKNSSEYE. Over residues 306-317 the composition is skewed to low complexity; sequence SQPPSTSTSQSS. Positions 318-337 are enriched in basic and acidic residues; that stretch reads KDYKSKSSSSKHDKNSSEYE. Positions 401–428 constitute a KOW 2 domain; sequence PREIGEKLMIVAGKRSGQLAVMLDKDKR.

Belongs to the MOS2 family.

Its subcellular location is the nucleus. This chain is G-patch domain and KOW motifs-containing protein homolog 1, found in Caenorhabditis elegans.